Reading from the N-terminus, the 430-residue chain is Putative membrane fusion protein SilB (430 aa).

An N-terminal signal peptide occupies residues methionine 1–glutamine 28. The interval arginine 407–histidine 430 is disordered. The span at asparagine 414–histidine 430 shows a compositional bias: polar residues.

It belongs to the membrane fusion protein (MFP) (TC 8.A.1) family.

Functionally, component of the sil cation efflux system that confers resistance to silver. May be part of a three-component cation/proton antiporter. This chain is Putative membrane fusion protein SilB (silB), found in Salmonella typhimurium.